An 812-amino-acid polypeptide reads, in one-letter code: DNA replication licensing factor MCM3 (812 aa).

Alanine 2 carries the N-acetylalanine modification. Serine 160 carries the phosphoserine modification. Lysine 293 carries the post-translational modification N6-acetyllysine. The MCM domain occupies 295-502 (VFEQLARSLA…QDREISDHVL (208 aa)). Glutamine 353, leucine 393, glutamate 394, alanine 395, and alanine 397 together coordinate ADP. Residues 477–480 (SRFD) carry the Arginine finger motif. At lysine 547 the chain carries N6-acetyllysine. Serine 611 carries the phosphoserine modification. An ATP-binding site is contributed by arginine 664. The segment at 664–744 (RKKASEDESD…TQDSQKVELS (81 aa)) is disordered. Residues serine 668, serine 672, and serine 681 each carry the phosphoserine modification. Acidic residues predominate over residues 670-681 (DESDLEDEEEKS). At tyrosine 705 the chain carries Phosphotyrosine. Serine 708 bears the Phosphoserine mark. A phosphothreonine mark is found at threonine 719, threonine 722, and threonine 729. Positions 720 to 744 (PKTDDSQEKTDDSQETQDSQKVELS) are enriched in basic and acidic residues. Phosphoserine is present on residues serine 732 and serine 738.

This sequence belongs to the MCM family. As to quaternary structure, component of the MCM2-7 complex. The complex forms a toroidal hexameric ring with the proposed subunit order MCM2-MCM6-MCM4-MCM7-MCM3-MCM5. Component of the CMG helicase complex, a hexameric ring of related MCM2-7 subunits stabilized by CDC45 and the tetrameric GINS complex. Associated with the replication-specific DNA polymerase alpha. Interacts with MCMBP. Interacts with ANKRD17. Interacts with MCM3AP; this interaction leads to MCM3 acetylation. In terms of processing, acetylated by MCM3AP. O-glycosylated (O-GlcNAcylated), in a cell cycle-dependent manner.

It localises to the nucleus. The protein resides in the chromosome. The enzyme catalyses ATP + H2O = ADP + phosphate + H(+). Acts as a component of the MCM2-7 complex (MCM complex) which is the replicative helicase essential for 'once per cell cycle' DNA replication initiation and elongation in eukaryotic cells. Core component of CDC45-MCM-GINS (CMG) helicase, the molecular machine that unwinds template DNA during replication, and around which the replisome is built. The active ATPase sites in the MCM2-7 ring are formed through the interaction surfaces of two neighboring subunits such that a critical structure of a conserved arginine finger motif is provided in trans relative to the ATP-binding site of the Walker A box of the adjacent subunit. The six ATPase active sites, however, are likely to contribute differentially to the complex helicase activity. Required for the entry in S phase and for cell division. This Mus musculus (Mouse) protein is DNA replication licensing factor MCM3 (Mcm3).